The primary structure comprises 170 residues: UPF0260 protein RPC_1790 (170 aa).

It belongs to the UPF0260 family.

The polypeptide is UPF0260 protein RPC_1790 (Rhodopseudomonas palustris (strain BisB18)).